The sequence spans 154 residues: Ribosomal RNA large subunit methyltransferase H (154 aa).

S-adenosyl-L-methionine is bound by residues leucine 70, glycine 102, and 121 to 126 (LSRLTF).

It belongs to the RNA methyltransferase RlmH family. As to quaternary structure, homodimer.

Its subcellular location is the cytoplasm. It catalyses the reaction pseudouridine(1915) in 23S rRNA + S-adenosyl-L-methionine = N(3)-methylpseudouridine(1915) in 23S rRNA + S-adenosyl-L-homocysteine + H(+). Functionally, specifically methylates the pseudouridine at position 1915 (m3Psi1915) in 23S rRNA. The polypeptide is Ribosomal RNA large subunit methyltransferase H (Geobacter metallireducens (strain ATCC 53774 / DSM 7210 / GS-15)).